Reading from the N-terminus, the 282-residue chain is Stress response regulator protein 1 (282 aa).

Low complexity-rich tracts occupy residues 12–30 (NLSR…HSST) and 45–58 (NSQS…SNNN). 3 disordered regions span residues 12–31 (NLSR…SSTV), 43–84 (DINS…DDED), and 112–139 (LTPF…TTVV). Residues 66–77 (SDYNSYTHNQYY) show a composition bias toward polar residues. The segment covering 125–139 (SIISSKSSNKSTTVV) has biased composition (low complexity). A Response regulatory domain is found at 155–273 (SFLIVDDNII…LDFMANSIDD (119 aa)). Aspartate 206 is subject to 4-aspartylphosphate.

Its function is as follows. Required for stress adaptation, morphogenesis and virulence. This Candida albicans (strain SC5314 / ATCC MYA-2876) (Yeast) protein is Stress response regulator protein 1 (SRR1).